We begin with the raw amino-acid sequence, 276 residues long: Diaminopimelate epimerase (276 aa).

Substrate contacts are provided by asparagine 13, glutamine 46, and asparagine 66. Cysteine 75 acts as the Proton donor in catalysis. Substrate is bound by residues 76 to 77, asparagine 159, asparagine 192, and 210 to 211; these read GN and ER. The active-site Proton acceptor is the cysteine 219. Substrate is bound at residue 220–221; sequence GT.

The protein belongs to the diaminopimelate epimerase family. In terms of assembly, homodimer.

Its subcellular location is the cytoplasm. It carries out the reaction (2S,6S)-2,6-diaminopimelate = meso-2,6-diaminopimelate. The protein operates within amino-acid biosynthesis; L-lysine biosynthesis via DAP pathway; DL-2,6-diaminopimelate from LL-2,6-diaminopimelate: step 1/1. In terms of biological role, catalyzes the stereoinversion of LL-2,6-diaminopimelate (L,L-DAP) to meso-diaminopimelate (meso-DAP), a precursor of L-lysine and an essential component of the bacterial peptidoglycan. This is Diaminopimelate epimerase from Pseudomonas aeruginosa (strain UCBPP-PA14).